Here is a 193-residue protein sequence, read N- to C-terminus: MPRLIFLGPPGAGKGTQAERLAAIYHTPKISTGDLLRAEVKAQTPLGCQAKVYMDAGELVPDEVLIGMVKGQLQQSPEQGWILDGFPRTLAQAEALEELLQELGQDYDYVLNLEVPDEVVVARLLARGKEQGRSDDADRSVILKRLEVYRQQTAPLIDFYEAKGRLQRVNGNQPMESVQEHLQALLEGFRRTA.

11–16 lines the ATP pocket; that stretch reads GAGKGT. The segment at 31–60 is NMP; it reads STGDLLRAEVKAQTPLGCQAKVYMDAGELV. AMP is bound by residues T32, R37, 58 to 60, 85 to 88, and Q92; these read ELV and GFPR. Positions 126 to 136 are LID; the sequence is ARGKEQGRSDD. R127 lines the ATP pocket. AMP is bound by residues R133 and R145. Q173 lines the ATP pocket.

Belongs to the adenylate kinase family. In terms of assembly, monomer.

The protein resides in the cytoplasm. It carries out the reaction AMP + ATP = 2 ADP. Its pathway is purine metabolism; AMP biosynthesis via salvage pathway; AMP from ADP: step 1/1. Its function is as follows. Catalyzes the reversible transfer of the terminal phosphate group between ATP and AMP. Plays an important role in cellular energy homeostasis and in adenine nucleotide metabolism. This is Adenylate kinase from Synechococcus sp. (strain JA-2-3B'a(2-13)) (Cyanobacteria bacterium Yellowstone B-Prime).